The primary structure comprises 107 residues: Ig kappa chain V-VI region TEPC 601/TEPC 191 (107 aa).

Residues 1–23 (EIVLTQSPAITAASLGQKVTITC) form a framework-1 region. A disulfide bridge connects residues cysteine 23 and cysteine 87. The complementarity-determining-1 stretch occupies residues 24-33 (SASSSVSYMH). The interval 34–48 (WYQQKSGTSPKPWIY) is framework-2. The tract at residues 49 to 55 (EISKLAS) is complementarity-determining-2. A framework-3 region spans residues 56–87 (GVPARFSGSGSGTSYSLTISSMEAEDAAIYYC). Positions 88 to 96 (QQWNYPLIT) are complementarity-determining-3. The tract at residues 97 to 106 (FGAGTKLELK) is framework-4.

The sequence is that of Ig kappa chain V-VI region TEPC 601/TEPC 191 from Mus musculus (Mouse).